Consider the following 141-residue polypeptide: Large ribosomal subunit protein uL16 (141 aa).

It belongs to the universal ribosomal protein uL16 family. In terms of assembly, part of the 50S ribosomal subunit.

Binds 23S rRNA and is also seen to make contacts with the A and possibly P site tRNAs. The chain is Large ribosomal subunit protein uL16 from Sulfurimonas denitrificans (strain ATCC 33889 / DSM 1251) (Thiomicrospira denitrificans (strain ATCC 33889 / DSM 1251)).